The following is a 119-amino-acid chain: C-X-C motif chemokine 17 (119 aa).

The signal sequence occupies residues Met-1–Ser-22. The interval Cys-75–Ser-100 is disordered. 2 disulfides stabilise this stretch: Cys-75–Cys-103 and Cys-77–Cys-110. Basic residues predominate over residues Gly-82–Arg-98.

The protein belongs to the intercrine alpha (chemokine CxC) family. Post-translationally, likely to undergo an endoproteolytic process to form a four-cysteine-containing mature peptide with a canonical CXC chemokine scaffold after secretion. Detected in lung, trachea, lung, tongue thyroid, submaxillary gland, epididymis, and uterus tissues and at a lower level in ovary, prostate and in intestinal tissues.

It is found in the secreted. In terms of biological role, chemokine that acts as a chemoattractant for monocytes, macrophages and dendritic cells. Plays a role in angiogenesis and possibly in the development of tumors. Acts as an anti-inflammatory in the stomach. May play a role in the innate defense against infections. Activates the C-X-C chemokine receptor GPR35 to induce a rapid and transient rise in the level of intracellular calcium ions. This chain is C-X-C motif chemokine 17 (Cxcl17), found in Mus musculus (Mouse).